A 408-amino-acid chain; its full sequence is MNYELLTTENAPVKMWTKGVPVEADARQQLINTAKMPFIFKHIAVMPDVHLGKGSTIGSVIPTKGAIIPAAVGVDIGCGMNALRTALTAEDLPENLAELRQAIETAVPHGRTTGRCKRDKGAWENPPVNVDAKWAELEAGYQWLTQKYPRFLNTNNYKHLGTLGTGNHFIEICLDESDQVWIMLHSGSRGIGNAIGTYFIDLAQKEMQETLETLPSRDLAYFMEGTEYFDDYLKAVAWAQLFASLNRDAMMENVVTALQSITQKTVRQPQTLAMEEINCHHNYVQKEQHFGEEIYVTRKGAVSARAGQYGIIPGSMGAKSFIVRGLGNEESFCSCSHGAGRVMSRTKAKKLFSVEDQIRATAHVECRKDAEVIDEIPMAYKDIDAVMAAQSDLVEVIYTLRQVVCVKG.

Residues Asp75, Cys78, His168, His185, and His281 each coordinate Mn(2+). A GMP-binding site is contributed by 167-171 (NHFIE). GMP contacts are provided by residues 281-282 (HN), 313-316 (PGSM), Ser320, 337-340 (HGAG), and Lys407. His337 (GMP-histidine intermediate) is an active-site residue.

The protein belongs to the RtcB family. In terms of assembly, monomer. Mn(2+) is required as a cofactor.

The catalysed reaction is a 3'-end 3'-phospho-ribonucleotide-RNA + a 5'-end dephospho-ribonucleoside-RNA + GTP = a ribonucleotidyl-ribonucleotide-RNA + GMP + diphosphate. The enzyme catalyses a 3'-end 2',3'-cyclophospho-ribonucleotide-RNA + a 5'-end dephospho-ribonucleoside-RNA + GTP + H2O = a ribonucleotidyl-ribonucleotide-RNA + GMP + diphosphate + H(+). In terms of biological role, GTP-dependent RNA ligase that is involved in RNA repair. Joins RNA with 2',3'-cyclic-phosphate or 3'-phosphate ends to RNA with 5'-hydroxy ends. Also acts as a DNA ligase in case of DNA damage by splicing 'dirty' DNA breaks, characterized by 3'-phosphate (or cyclic-phosphate) and 5'-hydroxy ends that cannot be sealed by classical DNA ligases. Repairs tRNA cleaved by colicins D or E5, does not repair damaged 16S rRNA. Able to catalyze tRNA splicing in vivo in yeast, but bacteria are not known to splice tRNA. This is RNA-splicing ligase RtcB from Escherichia coli (strain K12).